Here is a 406-residue protein sequence, read N- to C-terminus: Putative sodium-coupled neutral amino acid transporter 11 (406 aa).

Topologically, residues 1-7 are cytoplasmic; the sequence is MKQAGFP. The helical transmembrane segment at 8–28 threads the bilayer; it reads LGILLLFWVSYVTDFSLVLLI. N-linked (GlcNAc...) asparagine glycosylation is present at N44. 6 consecutive transmembrane segments (helical) span residues 48–68, 93–113, 121–141, 156–176, 202–222, and 241–263; these read GFPG…IAMI, VFIG…LPLS, LGKV…IVMA, AWVF…FAFI, MSIV…YLTF, and VTFG…CFVT. N275 is a glycosylation site (N-linked (GlcNAc...) asparagine). 3 consecutive transmembrane segments (helical) span residues 279 to 299, 301 to 321, and 340 to 360; these read VFHI…SLLI, CLGI…IFII, and IMSC…FVMA.

It belongs to the amino acid/polyamine transporter 2 family.

It localises to the membrane. Putative sodium-dependent amino acid/proton antiporter. The protein is Putative sodium-coupled neutral amino acid transporter 11 (SLC38A11) of Homo sapiens (Human).